We begin with the raw amino-acid sequence, 728 residues long: Fatty acid oxidation complex subunit alpha (728 aa).

The enoyl-CoA hydratase/isomerase stretch occupies residues 1–189 (MLYQSETIQV…KNGLIDAVVP (189 aa)). Residue D296 coordinates substrate. The segment at 311-728 (TIPEYAAVLG…TIAVSTGKTA (418 aa)) is 3-hydroxyacyl-CoA dehydrogenase. NAD(+) contacts are provided by residues M324, D343, 400–402 (VVE), K407, and S429. H450 (for 3-hydroxyacyl-CoA dehydrogenase activity) is an active-site residue. Residue N453 participates in NAD(+) binding. N500 and Y660 together coordinate substrate.

This sequence in the N-terminal section; belongs to the enoyl-CoA hydratase/isomerase family. It in the C-terminal section; belongs to the 3-hydroxyacyl-CoA dehydrogenase family. As to quaternary structure, heterotetramer of two alpha chains (FadB) and two beta chains (FadA).

The enzyme catalyses a (3S)-3-hydroxyacyl-CoA + NAD(+) = a 3-oxoacyl-CoA + NADH + H(+). It carries out the reaction a (3S)-3-hydroxyacyl-CoA = a (2E)-enoyl-CoA + H2O. The catalysed reaction is a 4-saturated-(3S)-3-hydroxyacyl-CoA = a (3E)-enoyl-CoA + H2O. It catalyses the reaction (3S)-3-hydroxybutanoyl-CoA = (3R)-3-hydroxybutanoyl-CoA. The enzyme catalyses a (3Z)-enoyl-CoA = a 4-saturated (2E)-enoyl-CoA. It carries out the reaction a (3E)-enoyl-CoA = a 4-saturated (2E)-enoyl-CoA. It participates in lipid metabolism; fatty acid beta-oxidation. Functionally, involved in the aerobic and anaerobic degradation of long-chain fatty acids via beta-oxidation cycle. Catalyzes the formation of 3-oxoacyl-CoA from enoyl-CoA via L-3-hydroxyacyl-CoA. It can also use D-3-hydroxyacyl-CoA and cis-3-enoyl-CoA as substrate. This chain is Fatty acid oxidation complex subunit alpha, found in Photorhabdus laumondii subsp. laumondii (strain DSM 15139 / CIP 105565 / TT01) (Photorhabdus luminescens subsp. laumondii).